Consider the following 1498-residue polypeptide: ATP-binding cassette sub-family C member 6 (1498 aa).

The Extracellular portion of the chain corresponds to Met1–Phe37. N-linked (GlcNAc...) asparagine glycosylation is present at Asn21. Residues Val38 to Leu58 form a helical membrane-spanning segment. The Cytoplasmic segment spans residues Leu59 to Lys78. A helical transmembrane segment spans residues Met79 to Arg99. At Ile100 to Val104 the chain is on the extracellular side. Residues Pro105–Thr125 form a helical membrane-spanning segment. Residues Phe126–Arg137 are Cytoplasmic-facing. A helical membrane pass occupies residues Ser138 to Ile155. At Asn156–His173 the chain is on the extracellular side. Residues Leu174–Asp194 form a helical membrane-spanning segment. Residues Gln195 to Ala300 lie on the Cytoplasmic side of the membrane. A helical membrane pass occupies residues Ile301 to Ala321. The region spanning Phe309 to Gln592 is the ABC transmembrane type-1 1 domain. Residues Phe322 to Gly347 are Extracellular-facing. Asn341 carries N-linked (GlcNAc...) asparagine glycosylation. A helical transmembrane segment spans residues Trp348–His368. Topologically, residues Met369–Tyr424 are cytoplasmic. The chain crosses the membrane as a helical span at residues Leu425 to Leu445. At Leu446–Pro448 the chain is on the extracellular side. Residues Ser449–Lys469 form a helical membrane-spanning segment. Residues Lys470–Ser531 lie on the Cytoplasmic side of the membrane. A helical transmembrane segment spans residues Val532–His552. Residues Thr553–Ser574 lie on the Extracellular side of the membrane. A helical transmembrane segment spans residues Ile575–Val595. Residues Ser596 to Leu934 lie on the Cytoplasmic side of the membrane. Residues Ile627 to Gly851 enclose the ABC transporter 1 domain. Gly661–Ser668 is an ATP binding site. The disordered stretch occupies residues Pro855–Ala910. Residues Arg935–Ala955 form a helical membrane-spanning segment. The ABC transmembrane type-1 2 domain occupies Cys942–Asn1223. Residues Ser956–Leu992 are Extracellular-facing. A helical membrane pass occupies residues Gln993–Gly1013. Over Leu1014–Asp1056 the chain is Cytoplasmic. Residues Lys1057–Met1077 traverse the membrane as a helical segment. A topological domain (extracellular) is located at residue Ala1078. A helical transmembrane segment spans residues Thr1079–Leu1099. At Tyr1100 to Leu1170 the chain is on the cytoplasmic side. The chain crosses the membrane as a helical span at residues Glu1171–His1191. The Extracellular portion of the chain corresponds to Leu1192–Ser1193. A helical transmembrane segment spans residues Ala1194 to Val1214. Topologically, residues Val1215–Ala1498 are cytoplasmic. The region spanning Ile1260–Glu1494 is the ABC transporter 2 domain. Residue Ser1281 is modified to Phosphoserine. Position 1294-1301 (Gly1294–Ser1301) interacts with ATP.

This sequence belongs to the ABC transporter superfamily. ABCC family. Conjugate transporter (TC 3.A.1.208) subfamily. Post-translationally, glycosylated.

It localises to the basolateral cell membrane. Its subcellular location is the basal cell membrane. The enzyme catalyses an S-substituted glutathione(in) + ATP + H2O = an S-substituted glutathione(out) + ADP + phosphate + H(+). It carries out the reaction leukotriene C4(in) + ATP + H2O = leukotriene C4(out) + ADP + phosphate + H(+). Its function is as follows. ATP-dependent transporter of the ATP-binding cassette (ABC) family that actively extrudes physiological compounds, and xenobiotics from cells. Mediates ATP-dependent transport of glutathione conjugates such as leukotriene-c4 (LTC4) and N-ethylmaleimide S-glutathione (NEM-GS) (in vitro), and an anionic cyclopentapeptide endothelin antagonist, BQ-123. May contribute to regulate the transport of organic compounds in testes across the blood-testis-barrier. In terms of biological role, mediates the release of nucleoside triphosphates, predominantly ATP, into the circulation, where it is rapidly converted into AMP and the mineralization inhibitor inorganic pyrophosphate (PPi) by the ecto-enzyme ectonucleotide pyrophosphatase phosphodiesterase 1 (ENPP1), therefore playing a role in PPi homeostasis. This is ATP-binding cassette sub-family C member 6 (Abcc6) from Mus musculus (Mouse).